The following is a 217-amino-acid chain: Choline transport system permease protein OpuBB (217 aa).

An ABC transmembrane type-1 domain is found at 19 to 198; that stretch reads TYEHITISLI…ILAIVIDYVL (180 aa). Transmembrane regions (helical) follow at residues 23 to 43, 52 to 74, 84 to 101, 128 to 148, 150 to 170, and 180 to 200; these read ITISLIAVILGVLVAVPLGVV, GTIIGIVNIIQTLPSLAILAFFI, AIVALFFYSVLPILRNTY, LVELPLAAPVIMAGIRTSTIY, IGWATLASFIGGGGLGDYIFI, and IIGGAVPVTILAIVIDYVLAV.

It belongs to the binding-protein-dependent transport system permease family. CysTW subfamily.

Its subcellular location is the cell membrane. Involved in a high affinity multicomponent binding-protein-dependent transport system for choline; probably responsible for the translocation of the substrate across the membrane. The chain is Choline transport system permease protein OpuBB (opuBB) from Bacillus subtilis (strain 168).